The primary structure comprises 111 residues: Phosphoribosyl-ATP pyrophosphatase (111 aa).

The protein belongs to the PRA-PH family.

It is found in the cytoplasm. The enzyme catalyses 1-(5-phospho-beta-D-ribosyl)-ATP + H2O = 1-(5-phospho-beta-D-ribosyl)-5'-AMP + diphosphate + H(+). Its pathway is amino-acid biosynthesis; L-histidine biosynthesis; L-histidine from 5-phospho-alpha-D-ribose 1-diphosphate: step 2/9. The polypeptide is Phosphoribosyl-ATP pyrophosphatase (Alcanivorax borkumensis (strain ATCC 700651 / DSM 11573 / NCIMB 13689 / SK2)).